Consider the following 807-residue polypeptide: Nucleolar complex protein 3 homolog (807 aa).

2 disordered regions span residues 27 to 93 (KLKN…DMMD) and 167 to 191 (EKPV…EVIE). Residues 40–51 (KKYRKEQRKLRQ) show a composition bias toward basic residues. The span at 52–78 (AVKDAVSKKPIPLEDPKSKRPVKRMER) shows a compositional bias: basic and acidic residues. Acidic residues-rich tracts occupy residues 79-93 (EEDE…DMMD) and 174-190 (QQEE…EEVI). Lys332 is covalently cross-linked (Glycyl lysine isopeptide (Lys-Gly) (interchain with G-Cter in SUMO2)). Residues 449–489 (FKEKRKTLSRMQRKWKKAEEKLERELREAEASESTEKKLKL) adopt a coiled-coil conformation.

It belongs to the CBF/MAK21 family.

The protein resides in the nucleus. The protein localises to the nucleolus. It is found in the nucleus speckle. Functionally, may be required for adipogenesis. The polypeptide is Nucleolar complex protein 3 homolog (Noc3l) (Mus musculus (Mouse)).